A 376-amino-acid chain; its full sequence is Succinyl-diaminopimelate desuccinylase (376 aa).

A Zn(2+)-binding site is contributed by H66. The active site involves D68. D99 contributes to the Zn(2+) binding site. Residue E133 is the Proton acceptor of the active site. The Zn(2+) site is built by E134, E162, and H348.

This sequence belongs to the peptidase M20A family. DapE subfamily. Homodimer. The cofactor is Zn(2+). Co(2+) serves as cofactor.

The enzyme catalyses N-succinyl-(2S,6S)-2,6-diaminopimelate + H2O = (2S,6S)-2,6-diaminopimelate + succinate. It functions in the pathway amino-acid biosynthesis; L-lysine biosynthesis via DAP pathway; LL-2,6-diaminopimelate from (S)-tetrahydrodipicolinate (succinylase route): step 3/3. Catalyzes the hydrolysis of N-succinyl-L,L-diaminopimelic acid (SDAP), forming succinate and LL-2,6-diaminopimelate (DAP), an intermediate involved in the bacterial biosynthesis of lysine and meso-diaminopimelic acid, an essential component of bacterial cell walls. This is Succinyl-diaminopimelate desuccinylase from Xanthomonas oryzae pv. oryzae (strain PXO99A).